Here is a 288-residue protein sequence, read N- to C-terminus: 4-hydroxybenzoate octaprenyltransferase (288 aa).

A run of 8 helical transmembrane segments spans residues 23 to 43, 46 to 66, 98 to 118, 141 to 161, 165 to 185, 213 to 233, 234 to 254, and 268 to 288; these read IGSLLLLWPTLWALWLAGKGI, TKILIVFVLGVFFMRAAGCVV, ILFVVLVLLSFGLVLTLNSMT, LPQVVLGAAFGWSIPMGFAAV, LPLVCWLLLLANICWTVAYDT, LIIGLLQLATLVLMVTIGWLM, NLGGAFYWSILLAGALFVHQQ, and AFLNNNYVGLVLFLGIFISYL.

Belongs to the UbiA prenyltransferase family. It depends on Mg(2+) as a cofactor.

The protein resides in the cell inner membrane. The catalysed reaction is all-trans-octaprenyl diphosphate + 4-hydroxybenzoate = 4-hydroxy-3-(all-trans-octaprenyl)benzoate + diphosphate. It participates in cofactor biosynthesis; ubiquinone biosynthesis. Functionally, catalyzes the prenylation of para-hydroxybenzoate (PHB) with an all-trans polyprenyl group. Mediates the second step in the final reaction sequence of ubiquinone-8 (UQ-8) biosynthesis, which is the condensation of the polyisoprenoid side chain with PHB, generating the first membrane-bound Q intermediate 3-octaprenyl-4-hydroxybenzoate. The sequence is that of 4-hydroxybenzoate octaprenyltransferase from Yersinia enterocolitica serotype O:8 / biotype 1B (strain NCTC 13174 / 8081).